A 503-amino-acid chain; its full sequence is ATP synthase subunit alpha (503 aa).

ATP is bound at residue 170-177 (GDRQTGKT).

It belongs to the ATPase alpha/beta chains family. As to quaternary structure, F-type ATPases have 2 components, CF(1) - the catalytic core - and CF(0) - the membrane proton channel. CF(1) has five subunits: alpha(3), beta(3), gamma(1), delta(1), epsilon(1). CF(0) has three main subunits: a(1), b(2) and c(9-12). The alpha and beta chains form an alternating ring which encloses part of the gamma chain. CF(1) is attached to CF(0) by a central stalk formed by the gamma and epsilon chains, while a peripheral stalk is formed by the delta and b chains.

The protein localises to the cell membrane. It carries out the reaction ATP + H2O + 4 H(+)(in) = ADP + phosphate + 5 H(+)(out). Functionally, produces ATP from ADP in the presence of a proton gradient across the membrane. The alpha chain is a regulatory subunit. The protein is ATP synthase subunit alpha of Brevibacillus brevis (strain 47 / JCM 6285 / NBRC 100599).